Consider the following 125-residue polypeptide: UPF0225 protein Cgl1438/cg1626 (125 aa).

This sequence belongs to the UPF0225 family.

The sequence is that of UPF0225 protein Cgl1438/cg1626 from Corynebacterium glutamicum (strain ATCC 13032 / DSM 20300 / JCM 1318 / BCRC 11384 / CCUG 27702 / LMG 3730 / NBRC 12168 / NCIMB 10025 / NRRL B-2784 / 534).